Consider the following 767-residue polypeptide: E3 ubiquitin-protein ligase pub1 (767 aa).

The C2 domain occupies 1–111 (MSNSAQSRRI…AIGGDEMLTR (111 aa)). Positions 138–158 (LQVPSSAASGARTQRTSITND) are enriched in polar residues. Disordered regions lie at residues 138–216 (LQVP…RRTD) and 252–306 (SASS…RPYF). Phosphothreonine is present on Thr156. The span at 159–176 (PQSSQSSSVSRNPASSRA) shows a compositional bias: low complexity. The residue at position 178 (Ser178) is a Phosphoserine. Thr180 carries the phosphothreonine modification. Positions 184–194 (APAASPASSEP) are enriched in low complexity. Residues 211–236 (WERRTDNLGRTYYVDHNTRSTTWIRP) form the WW 1 domain. Residues 257 to 286 (NVTEGVQPSSSNAARRTEASVLTSNATTAG) show a composition bias toward polar residues. WW domains are found at residues 294–319 (WEQR…WVDP) and 351–376 (WEMR…WDDP). One can recognise an HECT domain in the interval 463–767 (FLLSHEMFNP…VEETIGFGQE (305 aa)). Cys735 (glycyl thioester intermediate) is an active-site residue.

Its subcellular location is the membrane. The protein resides in the cytoplasm. It carries out the reaction S-ubiquitinyl-[E2 ubiquitin-conjugating enzyme]-L-cysteine + [acceptor protein]-L-lysine = [E2 ubiquitin-conjugating enzyme]-L-cysteine + N(6)-ubiquitinyl-[acceptor protein]-L-lysine.. It participates in protein modification; protein ubiquitination. In terms of biological role, E3 ubiquitin-protein ligase which accepts ubiquitin from an E2 ubiquitin-conjugating enzyme in the form of a thioester and then directly transfers the ubiquitin to targeted substrates. Regulates ubiquitination of cdc25. This chain is E3 ubiquitin-protein ligase pub1 (pub1), found in Schizosaccharomyces pombe (strain 972 / ATCC 24843) (Fission yeast).